The primary structure comprises 538 residues: Succinyl-CoA:acetate CoA-transferase (538 aa).

Residue Gly-305–Val-309 participates in CoA binding. Residue Glu-330 is the 5-glutamyl coenzyme A thioester intermediate of the active site. 2 residues coordinate CoA: Asn-420 and Gly-424.

It belongs to the acetyl-CoA hydrolase/transferase family.

It catalyses the reaction succinyl-CoA + acetate = succinate + acetyl-CoA. In terms of biological role, forms succinyl-CoA from succinate and acetyl-CoA. This is Succinyl-CoA:acetate CoA-transferase from Clostridium kluyveri (strain ATCC 8527 / DSM 555 / NBRC 12016 / NCIMB 10680 / K1).